We begin with the raw amino-acid sequence, 203 residues long: Small ribosomal subunit protein uS4 (203 aa).

An S4 RNA-binding domain is found at Arg93–Val156.

The protein belongs to the universal ribosomal protein uS4 family. As to quaternary structure, part of the 30S ribosomal subunit. Contacts protein S5. The interaction surface between S4 and S5 is involved in control of translational fidelity.

Its function is as follows. One of the primary rRNA binding proteins, it binds directly to 16S rRNA where it nucleates assembly of the body of the 30S subunit. In terms of biological role, with S5 and S12 plays an important role in translational accuracy. The chain is Small ribosomal subunit protein uS4 from Streptococcus pyogenes serotype M49 (strain NZ131).